Here is a 383-residue protein sequence, read N- to C-terminus: Erythronate-4-phosphate dehydrogenase (383 aa).

2 residues coordinate substrate: S45 and T66. NAD(+) contacts are provided by D146 and T175. Residue R208 is part of the active site. Position 232 (D232) interacts with NAD(+). E237 is an active-site residue. Residue H254 is the Proton donor of the active site. Position 257 (G257) interacts with NAD(+).

This sequence belongs to the D-isomer specific 2-hydroxyacid dehydrogenase family. PdxB subfamily. As to quaternary structure, homodimer.

It is found in the cytoplasm. The catalysed reaction is 4-phospho-D-erythronate + NAD(+) = (R)-3-hydroxy-2-oxo-4-phosphooxybutanoate + NADH + H(+). Its pathway is cofactor biosynthesis; pyridoxine 5'-phosphate biosynthesis; pyridoxine 5'-phosphate from D-erythrose 4-phosphate: step 2/5. Catalyzes the oxidation of erythronate-4-phosphate to 3-hydroxy-2-oxo-4-phosphonooxybutanoate. The chain is Erythronate-4-phosphate dehydrogenase from Chromohalobacter salexigens (strain ATCC BAA-138 / DSM 3043 / CIP 106854 / NCIMB 13768 / 1H11).